An 87-amino-acid chain; its full sequence is UPF0250 protein BUAPTUC7_482 (87 aa).

This sequence belongs to the UPF0250 family.

This is UPF0250 protein BUAPTUC7_482 from Buchnera aphidicola subsp. Acyrthosiphon pisum (strain Tuc7).